A 273-amino-acid chain; its full sequence is Shikimate dehydrogenase (NADP(+)) (273 aa).

Residues 15–17 (SKS) and T62 each bind shikimate. The active-site Proton acceptor is K66. D78 is a binding site for NADP(+). 2 residues coordinate shikimate: N87 and D103. NADP(+) contacts are provided by residues 127 to 131 (GAGGA), 150 to 155 (NRTHTR), A218, and G238.

The protein belongs to the shikimate dehydrogenase family. As to quaternary structure, homodimer.

It carries out the reaction shikimate + NADP(+) = 3-dehydroshikimate + NADPH + H(+). Its pathway is metabolic intermediate biosynthesis; chorismate biosynthesis; chorismate from D-erythrose 4-phosphate and phosphoenolpyruvate: step 4/7. In terms of biological role, involved in the biosynthesis of the chorismate, which leads to the biosynthesis of aromatic amino acids. Catalyzes the reversible NADPH linked reduction of 3-dehydroshikimate (DHSA) to yield shikimate (SA). This chain is Shikimate dehydrogenase (NADP(+)), found in Yersinia pseudotuberculosis serotype O:1b (strain IP 31758).